We begin with the raw amino-acid sequence, 314 residues long: Putative S-adenosyl-L-methionine-dependent methyltransferase MAV_0301 (314 aa).

S-adenosyl-L-methionine is bound by residues Asp-132 and 161-162 (DL).

Belongs to the UPF0677 family.

Functionally, exhibits S-adenosyl-L-methionine-dependent methyltransferase activity. This is Putative S-adenosyl-L-methionine-dependent methyltransferase MAV_0301 from Mycobacterium avium (strain 104).